Consider the following 310-residue polypeptide: MQQNPHTHAAPGAARPVLRGVRRRLAAVTAAVAAVLVLGTLTGPGAQAADNPYERGPAPTESSIEALRGPYSVADTSVSSLAVTGFGGGTIYYPTSTSDGTFGAVVIAPGFTAYQSSIAWLGPRLASQGFVVFTIDTNTTLDQPDSRGRQLLAALDYLTGRSSVRGRIDSGRLGVMGHSMGGGGTLEAAKSRPSLQAAIPLTPWNLDKSWPEVSTPTLVVGADGDTIAPVASHAEPFYSGLPSSTDRAYLELNNATHFSPNTSNTTIAKYSISWLKRFIDDDTRYEQFLCPLPRPSLTIEEYRGNCPHGS.

The tat-type signal signal peptide spans 1 to 48 (MQQNPHTHAAPGAARPVLRGVRRRLAAVTAAVAAVLVLGTLTGPGAQA). Phenylalanine 111 serves as a coordination point for bis(2-hydroxyethyl) terephthalate. Serine 179 serves as the catalytic Nucleophile. Bis(2-hydroxyethyl) terephthalate contacts are provided by methionine 180 and tryptophan 204. Residues aspartate 225 and histidine 257 each act as charge relay system in the active site. Cysteine 290 and cysteine 306 are joined by a disulfide.

The protein belongs to the AB hydrolase superfamily. In terms of processing, predicted to be exported by the Tat system. The position of the signal peptide cleavage has not been experimentally proven.

It is found in the secreted. The enzyme catalyses bis(2-hydroxyethyl) terephthalate + H2O = 4-[(2-hydroxyethoxy)carbonyl]benzoate + ethylene glycol + H(+). Functionally, catalyzes the degradation of bis(hydroxyethyl) terephthalate (BHET), a derived-oligomer of the plastic poly(ethylene terephthalate) (PET), hydrolyzing BHET to mono(2-hydroxyethyl) terephthalate (MHET). Shows no activity against PET. This Streptomyces coelicolor (strain ATCC BAA-471 / A3(2) / M145) protein is Bis(hydroxyethyl) terephthalate hydrolase.